A 329-amino-acid polypeptide reads, in one-letter code: Probable allantoicase (329 aa).

The protein belongs to the allantoicase family.

It catalyses the reaction allantoate + H2O = (S)-ureidoglycolate + urea. The protein operates within nitrogen metabolism; (S)-allantoin degradation; (S)-ureidoglycolate from allantoate (aminidohydrolase route): step 1/1. The protein is Probable allantoicase of Nocardia farcinica (strain IFM 10152).